Here is a 664-residue protein sequence, read N- to C-terminus: DNA ligase (664 aa).

Residues 32-36 (DKEYD) and 80-81 (SL) each bind NAD(+). Lys-122 serves as the catalytic N6-AMP-lysine intermediate. Positions 144, 178, and 314 each coordinate NAD(+). Cys-407, Cys-410, Cys-423, and Cys-429 together coordinate Zn(2+). The 78-residue stretch at 587–664 (IDENPFMDKT…NEEEFSNKIK (78 aa)) folds into the BRCT domain.

It belongs to the NAD-dependent DNA ligase family. LigA subfamily. Mg(2+) serves as cofactor. It depends on Mn(2+) as a cofactor.

The catalysed reaction is NAD(+) + (deoxyribonucleotide)n-3'-hydroxyl + 5'-phospho-(deoxyribonucleotide)m = (deoxyribonucleotide)n+m + AMP + beta-nicotinamide D-nucleotide.. DNA ligase that catalyzes the formation of phosphodiester linkages between 5'-phosphoryl and 3'-hydroxyl groups in double-stranded DNA using NAD as a coenzyme and as the energy source for the reaction. It is essential for DNA replication and repair of damaged DNA. The chain is DNA ligase from Clostridium botulinum (strain Langeland / NCTC 10281 / Type F).